Here is a 383-residue protein sequence, read N- to C-terminus: Acetylornithine deacetylase (383 aa).

A Zn(2+)-binding site is contributed by H80. The active site involves D82. D112 provides a ligand contact to Zn(2+). E144 is an active-site residue. Zn(2+) is bound by residues E145, E169, and H355.

It belongs to the peptidase M20A family. ArgE subfamily. As to quaternary structure, homodimer. It depends on Zn(2+) as a cofactor. Co(2+) serves as cofactor. Glutathione is required as a cofactor.

The protein resides in the cytoplasm. The enzyme catalyses N(2)-acetyl-L-ornithine + H2O = L-ornithine + acetate. It participates in amino-acid biosynthesis; L-arginine biosynthesis; L-ornithine from N(2)-acetyl-L-ornithine (linear): step 1/1. Its function is as follows. Catalyzes the hydrolysis of the amide bond of N(2)-acetylated L-amino acids. Cleaves the acetyl group from N-acetyl-L-ornithine to form L-ornithine, an intermediate in L-arginine biosynthesis pathway, and a branchpoint in the synthesis of polyamines. The protein is Acetylornithine deacetylase of Edwardsiella ictaluri (strain 93-146).